Here is a 502-residue protein sequence, read N- to C-terminus: L-arabinose isomerase (502 aa).

Mn(2+) is bound by residues glutamate 306, glutamate 333, histidine 350, and histidine 449.

It belongs to the arabinose isomerase family. Requires Mn(2+) as cofactor.

The catalysed reaction is beta-L-arabinopyranose = L-ribulose. It participates in carbohydrate degradation; L-arabinose degradation via L-ribulose; D-xylulose 5-phosphate from L-arabinose (bacterial route): step 1/3. In terms of biological role, catalyzes the conversion of L-arabinose to L-ribulose. This is L-arabinose isomerase from Flavobacterium johnsoniae (strain ATCC 17061 / DSM 2064 / JCM 8514 / BCRC 14874 / CCUG 350202 / NBRC 14942 / NCIMB 11054 / UW101) (Cytophaga johnsonae).